Consider the following 273-residue polypeptide: Formamidopyrimidine-DNA glycosylase (273 aa).

The active-site Schiff-base intermediate with DNA is the P2. Catalysis depends on E3, which acts as the Proton donor. The Proton donor; for beta-elimination activity role is filled by K60. DNA contacts are provided by H94, R113, and R154. The FPG-type zinc-finger motif lies at 239–273 (NAYDREGQPCPRCGATIIKTVVAQRGTHYCPECQR). The Proton donor; for delta-elimination activity role is filled by R263.

The protein belongs to the FPG family. As to quaternary structure, monomer. It depends on Zn(2+) as a cofactor.

It catalyses the reaction Hydrolysis of DNA containing ring-opened 7-methylguanine residues, releasing 2,6-diamino-4-hydroxy-5-(N-methyl)formamidopyrimidine.. The catalysed reaction is 2'-deoxyribonucleotide-(2'-deoxyribose 5'-phosphate)-2'-deoxyribonucleotide-DNA = a 3'-end 2'-deoxyribonucleotide-(2,3-dehydro-2,3-deoxyribose 5'-phosphate)-DNA + a 5'-end 5'-phospho-2'-deoxyribonucleoside-DNA + H(+). Its function is as follows. Involved in base excision repair of DNA damaged by oxidation or by mutagenic agents. Acts as a DNA glycosylase that recognizes and removes damaged bases. Has a preference for oxidized purines, such as 7,8-dihydro-8-oxoguanine (8-oxoG). Has AP (apurinic/apyrimidinic) lyase activity and introduces nicks in the DNA strand. Cleaves the DNA backbone by beta-delta elimination to generate a single-strand break at the site of the removed base with both 3'- and 5'-phosphates. The sequence is that of Formamidopyrimidine-DNA glycosylase from Roseiflexus sp. (strain RS-1).